A 331-amino-acid polypeptide reads, in one-letter code: Activator of 90 kDa heat shock protein ATPase homolog 2 (331 aa).

It belongs to the AHA1 family.

Functionally, co-chaperone that stimulates HSP90 ATPase activity. This is Activator of 90 kDa heat shock protein ATPase homolog 2 (Ahsa2) from Mus musculus (Mouse).